A 420-amino-acid polypeptide reads, in one-letter code: Protein disulfide isomerase Creld1 (420 aa).

The N-terminal stretch at 1–29 (MAPLPPRGLVPSLLWCLSLFLSLPGPVWL) is a signal peptide. The Extracellular segment spans residues 30–362 (QPSPPPHPSP…GFFAEMTEDE (333 aa)). The CXXC motif lies at 46–49 (CHTC). 4 disulfides stabilise this stretch: C46–C49, C155–C169, C163–C181, and C183–C192. Residues 153–193 (LPCPGGTERPCGGYGQCEGEGTRGGSGHCDCQAGYGGEACG) enclose the EGF-like 1 domain. A glycan (N-linked (GlcNAc...) asparagine) is linked at N205. FU repeat units follow at residues 208–255 (HLVC…EQAT) and 268–315 (SYEC…VVCP). The short motif at 278–281 (CLGC) is the CXXC element. 4 disulfides stabilise this stretch: C278–C281, C309–C321, C314–C330, and C332–C343. The 38-residue stretch at 305-342 (DVDECETVVCPGENEKCENTEGGYRCVCAEGYRQEDGI) folds into the EGF-like 2; calcium-binding domain. A helical membrane pass occupies residues 363–383 (MVVLQQMFFGVIICALATLAA). Residue K384 is a topological domain, cytoplasmic. Residues 385–405 (GDLVFTAIFIGAVAAMTGYWL) form a helical membrane-spanning segment. The Extracellular portion of the chain corresponds to 406–420 (SERSDRVLEGFIKGR).

Belongs to the CRELD family. In terms of tissue distribution, expressed in myoblast C2C12 cells (at protein level).

It localises to the membrane. The enzyme catalyses Catalyzes the rearrangement of -S-S- bonds in proteins.. In terms of biological role, protein disulfide isomerase. Promotes the localization of acetylcholine receptors (AChRs) to the plasma membrane. This is Protein disulfide isomerase Creld1 (Creld1) from Mus musculus (Mouse).